Reading from the N-terminus, the 359-residue chain is 3-dehydroquinate synthase (359 aa).

Residues 71-76, 105-109, 129-130, K142, and K151 each bind NAD(+); these read DGEQHK, GVIGD, and TT. E184, H247, and H264 together coordinate Zn(2+).

It belongs to the sugar phosphate cyclases superfamily. Dehydroquinate synthase family. NAD(+) is required as a cofactor. The cofactor is Co(2+). It depends on Zn(2+) as a cofactor.

It localises to the cytoplasm. The catalysed reaction is 7-phospho-2-dehydro-3-deoxy-D-arabino-heptonate = 3-dehydroquinate + phosphate. It functions in the pathway metabolic intermediate biosynthesis; chorismate biosynthesis; chorismate from D-erythrose 4-phosphate and phosphoenolpyruvate: step 2/7. In terms of biological role, catalyzes the conversion of 3-deoxy-D-arabino-heptulosonate 7-phosphate (DAHP) to dehydroquinate (DHQ). The sequence is that of 3-dehydroquinate synthase from Chromobacterium violaceum (strain ATCC 12472 / DSM 30191 / JCM 1249 / CCUG 213 / NBRC 12614 / NCIMB 9131 / NCTC 9757 / MK).